Here is a 106-residue protein sequence, read N- to C-terminus: Large ribosomal subunit protein uL24 (106 aa).

The protein belongs to the universal ribosomal protein uL24 family. Part of the 50S ribosomal subunit.

One of two assembly initiator proteins, it binds directly to the 5'-end of the 23S rRNA, where it nucleates assembly of the 50S subunit. Its function is as follows. One of the proteins that surrounds the polypeptide exit tunnel on the outside of the subunit. The polypeptide is Large ribosomal subunit protein uL24 (Laribacter hongkongensis (strain HLHK9)).